The primary structure comprises 205 residues: MNQTENMEGTTTVGFVCTDGVVLATETRATMGSLVANKNADKLFQIDDKIGATIAGTVSHAQSLMDILKAEISLYKLRNEKDMSIDALAVLTSNILKSRPYYVQTILAGVDKDGAKLYTLDPSGSYIPDTFTSTGSGSPYAFGVLEDRYNEDITTEEGKKIAIKAITSAMERDVYSGNNYRLGVITKDGMKIYTKEEIAQIKKQL.

The propeptide at 1–9 (MNQTENMEG) is removed in mature form; by autocatalysis. The active-site Nucleophile is the T10.

Belongs to the peptidase T1B family. In terms of assembly, the 20S proteasome core is composed of 14 alpha and 14 beta subunits that assemble into four stacked heptameric rings, resulting in a barrel-shaped structure. The two inner rings, each composed of seven catalytic beta subunits, are sandwiched by two outer rings, each composed of seven alpha subunits. The catalytic chamber with the active sites is on the inside of the barrel. Has a gated structure, the ends of the cylinder being occluded by the N-termini of the alpha-subunits. Is capped at one or both ends by the proteasome regulatory ATPase, PAN.

The protein localises to the cytoplasm. The enzyme catalyses Cleavage of peptide bonds with very broad specificity.. Its activity is regulated as follows. The formation of the proteasomal ATPase PAN-20S proteasome complex, via the docking of the C-termini of PAN into the intersubunit pockets in the alpha-rings, triggers opening of the gate for substrate entry. Interconversion between the open-gate and close-gate conformations leads to a dynamic regulation of the 20S proteasome proteolysis activity. In terms of biological role, component of the proteasome core, a large protease complex with broad specificity involved in protein degradation. The protein is Proteasome subunit beta of Methanosphaera stadtmanae (strain ATCC 43021 / DSM 3091 / JCM 11832 / MCB-3).